Reading from the N-terminus, the 82-residue chain is Turripeptide Gsg9.1 (82 aa).

An N-terminal signal peptide occupies residues 1-23; the sequence is MMAKLMITVMTVFFLSLQQGADG. The propeptide occupies 24–46; the sequence is LFERWRKNQMAASRIMGNLITAR. 4-hydroxyproline occurs at positions 49 and 50. 3 disulfides stabilise this stretch: C53–C68, C58–C72, and C64–C79. 4-carboxyglutamate is present on residues E60 and E63.

The protein belongs to the Pg turripeptide superfamily. Expressed by the venom duct.

The protein localises to the secreted. The protein is Turripeptide Gsg9.1 of Gemmula sogodensis (Gem-turris).